The following is a 187-amino-acid chain: UPF0167 protein MT2352 (187 aa).

Belongs to the UPF0167 family.

The protein is UPF0167 protein MT2352 of Mycobacterium tuberculosis (strain CDC 1551 / Oshkosh).